We begin with the raw amino-acid sequence, 525 residues long: GMP synthase [glutamine-hydrolyzing] (525 aa).

The Glutamine amidotransferase type-1 domain occupies 9–207 (RVLILDFGSQ…VLEIAGCEPL (199 aa)). Residue Cys-86 is the Nucleophile of the active site. Residues His-181 and Glu-183 contribute to the active site. The region spanning 208 to 400 (WTPANIVEDA…LGLPYDMVYR (193 aa)) is the GMPS ATP-PPase domain. 235–241 (SGGVDSS) contacts ATP.

As to quaternary structure, homodimer.

It catalyses the reaction XMP + L-glutamine + ATP + H2O = GMP + L-glutamate + AMP + diphosphate + 2 H(+). The protein operates within purine metabolism; GMP biosynthesis; GMP from XMP (L-Gln route): step 1/1. Its function is as follows. Catalyzes the synthesis of GMP from XMP. This chain is GMP synthase [glutamine-hydrolyzing], found in Teredinibacter turnerae (strain ATCC 39867 / T7901).